Consider the following 888-residue polypeptide: Phosphoenolpyruvate carboxylase (888 aa).

Residues His-144 and Lys-553 contribute to the active site.

The protein belongs to the PEPCase type 1 family. Mg(2+) serves as cofactor.

It catalyses the reaction oxaloacetate + phosphate = phosphoenolpyruvate + hydrogencarbonate. In terms of biological role, forms oxaloacetate, a four-carbon dicarboxylic acid source for the tricarboxylic acid cycle. In Alcanivorax borkumensis (strain ATCC 700651 / DSM 11573 / NCIMB 13689 / SK2), this protein is Phosphoenolpyruvate carboxylase.